The chain runs to 183 residues: Chromophore lyase CpcT/CpeT 4 (183 aa).

This sequence belongs to the CpcT/CpeT biliprotein lyase family.

In terms of biological role, covalently attaches a chromophore to Cys residue(s) of phycobiliproteins. This chain is Chromophore lyase CpcT/CpeT 4, found in Gloeobacter violaceus (strain ATCC 29082 / PCC 7421).